The chain runs to 679 residues: Glycine--tRNA ligase beta subunit (679 aa).

The protein belongs to the class-II aminoacyl-tRNA synthetase family. In terms of assembly, tetramer of two alpha and two beta subunits.

The protein localises to the cytoplasm. It catalyses the reaction tRNA(Gly) + glycine + ATP = glycyl-tRNA(Gly) + AMP + diphosphate. The protein is Glycine--tRNA ligase beta subunit of Streptococcus pyogenes serotype M1.